A 329-amino-acid polypeptide reads, in one-letter code: DNA-directed RNA polymerase subunit alpha (329 aa).

Residues methionine 1–threonine 231 are alpha N-terminal domain (alpha-NTD). The segment at glutamate 247 to aspartate 329 is alpha C-terminal domain (alpha-CTD).

This sequence belongs to the RNA polymerase alpha chain family. As to quaternary structure, homodimer. The RNAP catalytic core consists of 2 alpha, 1 beta, 1 beta' and 1 omega subunit. When a sigma factor is associated with the core the holoenzyme is formed, which can initiate transcription.

It carries out the reaction RNA(n) + a ribonucleoside 5'-triphosphate = RNA(n+1) + diphosphate. Functionally, DNA-dependent RNA polymerase catalyzes the transcription of DNA into RNA using the four ribonucleoside triphosphates as substrates. In Cytophaga hutchinsonii (strain ATCC 33406 / DSM 1761 / CIP 103989 / NBRC 15051 / NCIMB 9469 / D465), this protein is DNA-directed RNA polymerase subunit alpha.